The sequence spans 147 residues: Sentan (147 aa).

The disordered stretch occupies residues R14–M34. The span at P25–M34 shows a compositional bias: polar residues.

Belongs to the S-100 family.

Its subcellular location is the cell projection. The protein localises to the cilium. May be a component of the linker structure that bridges the ciliary membrane and peripheral singlet microtubules. The protein is Sentan (SNTN) of Bos taurus (Bovine).